A 122-amino-acid polypeptide reads, in one-letter code: Large ribosomal subunit protein uL14 (122 aa).

This sequence belongs to the universal ribosomal protein uL14 family. As to quaternary structure, part of the 50S ribosomal subunit. Forms a cluster with proteins L3 and L19. In the 70S ribosome, L14 and L19 interact and together make contacts with the 16S rRNA in bridges B5 and B8.

Functionally, binds to 23S rRNA. Forms part of two intersubunit bridges in the 70S ribosome. The sequence is that of Large ribosomal subunit protein uL14 from Kosmotoga olearia (strain ATCC BAA-1733 / DSM 21960 / TBF 19.5.1).